Here is a 209-residue protein sequence, read N- to C-terminus: Superoxide dismutase [Mn/Fe] (209 aa).

Fe(3+)-binding residues include His38, His90, Asp172, and His176. The Mn(2+) site is built by His38, His90, Asp172, and His176.

The protein belongs to the iron/manganese superoxide dismutase family. Mn(2+) is required as a cofactor. Requires Fe(3+) as cofactor.

The enzyme catalyses 2 superoxide + 2 H(+) = H2O2 + O2. Destroys superoxide anion radicals which are normally produced within the cells and which are toxic to biological systems. Catalyzes the dismutation of superoxide anion radicals into O2 and H2O2 by successive reduction and oxidation of the transition metal ion at the active site. This is Superoxide dismutase [Mn/Fe] (sodB) from Rickettsia conorii (strain ATCC VR-613 / Malish 7).